A 352-amino-acid polypeptide reads, in one-letter code: Transcription factor MYB51 (352 aa).

HTH myb-type domains are found at residues 10–62 (ELGL…ANYL) and 63–117 (RPDI…KKRL). DNA-binding regions (H-T-H motif) lie at residues 38-62 (WRTL…ANYL) and 90-113 (WSAI…NTHI). 2 disordered regions span residues 128-157 (KGIT…DLDN) and 198-219 (GGPL…SVDS). The segment covering 203–219 (STSHTTNTTTTSVSVDS) has biased composition (low complexity).

As to quaternary structure, can form complexes with MYC2, MYC3 or MYC4. Expressed in vegetative parts of the plant, mainly in mature rosette leaves and in trichomes. Detected in roots, but not in mature flowers or siliques.

It localises to the nucleus. Functionally, transcription factor positively regulating indolic glucosinolate biosynthetic pathway genes. The protein is Transcription factor MYB51 (MYB51) of Arabidopsis thaliana (Mouse-ear cress).